The primary structure comprises 427 residues: Flotillin-1 (427 aa).

3 positions are modified to phosphoserine: Ser-19, Ser-163, and Ser-385. Thr-387 carries the phosphothreonine modification.

The protein belongs to the band 7/mec-2 family. Flotillin subfamily. Heterooligomeric complex of flotillin-1 and flotillin-2 and caveolin-1 and caveolin-2. Interacts with ECPAS.

It localises to the cell membrane. It is found in the endosome. The protein resides in the membrane. The protein localises to the caveola. Its subcellular location is the melanosome. It localises to the membrane raft. Its function is as follows. May act as a scaffolding protein within caveolar membranes, functionally participating in formation of caveolae or caveolae-like vesicles. This chain is Flotillin-1 (FLOT1), found in Pongo abelii (Sumatran orangutan).